Here is a 294-residue protein sequence, read N- to C-terminus: 4-hydroxybenzoate octaprenyltransferase (294 aa).

8 consecutive transmembrane segments (helical) span residues 20–42, 98–118, 120–140, 145–165, 175–195, 218–238, 242–262, and 274–294; these read LLRI…ALWL, WEAV…VVLF, NTLT…YPFM, HLPQ…AWAA, WLLF…YAMV, AIIA…GQRA, SFYY…QYLA, and FLNN…DLAF.

The protein belongs to the UbiA prenyltransferase family. The cofactor is Mg(2+).

The protein localises to the cell inner membrane. The enzyme catalyses all-trans-octaprenyl diphosphate + 4-hydroxybenzoate = 4-hydroxy-3-(all-trans-octaprenyl)benzoate + diphosphate. The protein operates within cofactor biosynthesis; ubiquinone biosynthesis. Its function is as follows. Catalyzes the prenylation of para-hydroxybenzoate (PHB) with an all-trans polyprenyl group. Mediates the second step in the final reaction sequence of ubiquinone-8 (UQ-8) biosynthesis, which is the condensation of the polyisoprenoid side chain with PHB, generating the first membrane-bound Q intermediate 3-octaprenyl-4-hydroxybenzoate. The chain is 4-hydroxybenzoate octaprenyltransferase from Marinobacter nauticus (strain ATCC 700491 / DSM 11845 / VT8) (Marinobacter aquaeolei).